Reading from the N-terminus, the 867-residue chain is Inactive tyrosine-protein kinase kin-32 (867 aa).

The 325-residue stretch at glycine 3–aspartate 327 folds into the FERM domain. In terms of domain architecture, Protein kinase spans isoleucine 367–isoleucine 631. ATP is bound by residues isoleucine 373–valine 381 and lysine 400. Residues threonine 662–aspartate 691 adopt a coiled-coil conformation. Positions alanine 674–aspartate 729 are disordered. Positions glutamine 683 to isoleucine 694 are enriched in acidic residues. Polar residues predominate over residues proline 698–serine 724.

It belongs to the protein kinase superfamily. Tyr protein kinase family. FAK subfamily. Expressed in body wall muscles and some neurons in the head.

Its function is as follows. Has apparently no tyrosine kinase activity in vitro when expressed in mammalian cells. This chain is Inactive tyrosine-protein kinase kin-32, found in Caenorhabditis elegans.